The chain runs to 344 residues: N-acetyl-gamma-glutamyl-phosphate reductase (344 aa).

Residue Cys150 is part of the active site.

The protein belongs to the NAGSA dehydrogenase family. Type 1 subfamily.

The protein resides in the cytoplasm. The catalysed reaction is N-acetyl-L-glutamate 5-semialdehyde + phosphate + NADP(+) = N-acetyl-L-glutamyl 5-phosphate + NADPH + H(+). The protein operates within amino-acid biosynthesis; L-arginine biosynthesis; N(2)-acetyl-L-ornithine from L-glutamate: step 3/4. Catalyzes the NADPH-dependent reduction of N-acetyl-5-glutamyl phosphate to yield N-acetyl-L-glutamate 5-semialdehyde. This Pseudomonas putida (strain W619) protein is N-acetyl-gamma-glutamyl-phosphate reductase.